Here is a 427-residue protein sequence, read N- to C-terminus: Enolase (427 aa).

Q163 contributes to the (2R)-2-phosphoglycerate binding site. The active-site Proton donor is the E205. Mg(2+)-binding residues include D242, E285, and D312. (2R)-2-phosphoglycerate is bound by residues K337, R366, S367, and K388. The active-site Proton acceptor is K337.

Belongs to the enolase family. Mg(2+) serves as cofactor.

It localises to the cytoplasm. The protein resides in the secreted. It is found in the cell surface. The enzyme catalyses (2R)-2-phosphoglycerate = phosphoenolpyruvate + H2O. It participates in carbohydrate degradation; glycolysis; pyruvate from D-glyceraldehyde 3-phosphate: step 4/5. In terms of biological role, catalyzes the reversible conversion of 2-phosphoglycerate (2-PG) into phosphoenolpyruvate (PEP). It is essential for the degradation of carbohydrates via glycolysis. The polypeptide is Enolase (Xanthobacter autotrophicus (strain ATCC BAA-1158 / Py2)).